Consider the following 106-residue polypeptide: Venom family 8-like peptide Pr8a (106 aa).

The first 17 residues, 1 to 17 (MSPIAFLLPFLLQMVLS), serve as a signal peptide directing secretion.

Post-translationally, contains 2 disulfide bonds. In terms of tissue distribution, expressed by the venom gland (anterior main gland) (at protein level).

It localises to the secreted. The protein is Venom family 8-like peptide Pr8a of Platymeris rhadamanthus (Red spot assassin bug).